Here is a 379-residue protein sequence, read N- to C-terminus: Cytochrome b (379 aa).

A run of 4 helical transmembrane segments spans residues 34–54, 78–99, 114–134, and 179–199; these read FGSLLGICLITQILTGLLLAM, WLIRNLHANGASFFFICIYLHI, WNTGVVLLLTLMATAFVGYVL, and FFALHFLLPFLIAGITLIHLT. Residues His-84 and His-98 each contribute to the heme b site. Positions 183 and 197 each coordinate heme b. His-202 provides a ligand contact to a ubiquinone. The next 4 membrane-spanning stretches (helical) occupy residues 227–247, 289–309, 321–341, and 348–368; these read LKDALGFALMFIPLLTLAFFS, LGGVLALAASVLILFLIPFLH, LSQILFWLLVANLLILTWIGS, and FIIIGQMASFSYFLILLVLFP.

Belongs to the cytochrome b family. As to quaternary structure, the cytochrome bc1 complex contains 11 subunits: 3 respiratory subunits (MT-CYB, CYC1 and UQCRFS1), 2 core proteins (UQCRC1 and UQCRC2) and 6 low-molecular weight proteins (UQCRH/QCR6, UQCRB/QCR7, UQCRQ/QCR8, UQCR10/QCR9, UQCR11/QCR10 and a cleavage product of UQCRFS1). This cytochrome bc1 complex then forms a dimer. Requires heme b as cofactor.

It is found in the mitochondrion inner membrane. Functionally, component of the ubiquinol-cytochrome c reductase complex (complex III or cytochrome b-c1 complex) that is part of the mitochondrial respiratory chain. The b-c1 complex mediates electron transfer from ubiquinol to cytochrome c. Contributes to the generation of a proton gradient across the mitochondrial membrane that is then used for ATP synthesis. In Rhea americana (Greater rhea), this protein is Cytochrome b (MT-CYB).